A 100-amino-acid chain; its full sequence is Elastin (100 aa).

4-hydroxyproline is present on residues Pro72 and Pro86. A disulfide bridge connects residues Cys90 and Cys95.

It belongs to the elastin family. The polymeric elastin chains are cross-linked together into an extensible 3D network. Forms a ternary complex with BGN and MFAP2. Interacts with MFAP2 via divalent cations (calcium &gt; magnesium &gt; manganese) in a dose-dependent and saturating manner. Interacts with FBLN5 and FBN1. Forms a ternary complex with FBN1 and FBLN2 or FBLN5. Interacts with MFAP4 in a Ca (2+)-dependent manner; this interaction promotes ELN self-assembly. Interacts with EFEMP2 with moderate affinity. Elastin is formed through the cross-linking of its soluble precursor tropoelastin. Cross-linking is initiated through the action of lysyl oxidase on exposed lysines to form allysine. Subsequent spontaneous condensation reactions with other allysine or unmodified lysine residues result in various bi-, tri-, and tetrafunctional cross-links. The most abundant cross-links in mature elastin fibers are lysinonorleucine, allysine aldol, desmosine, and isodesmosine. Post-translationally, hydroxylation on proline residues within the sequence motif, GXPG, is most likely to be 4-hydroxy as this fits the requirement for 4-hydroxylation in vertebrates.

Its subcellular location is the secreted. It localises to the extracellular space. The protein resides in the extracellular matrix. Its function is as follows. Major structural protein of tissues such as aorta and nuchal ligament, which must expand rapidly and recover completely. Molecular determinant of the late arterial morphogenesis, stabilizing arterial structure by regulating proliferation and organization of vascular smooth muscle. The chain is Elastin (ELN) from Ovis aries (Sheep).